Consider the following 126-residue polypeptide: Protein ApaG (126 aa).

The ApaG domain maps to S2–H126.

The protein is Protein ApaG of Pseudomonas aeruginosa (strain LESB58).